The sequence spans 157 residues: uncharacterized protein (157 aa).

This is an uncharacterized protein from Saccharomyces cerevisiae (strain ATCC 204508 / S288c) (Baker's yeast).